The chain runs to 332 residues: Ferredoxin--NADP reductase 2 (332 aa).

Residues Asp33, Gln41, Tyr46, Val86, Ile121, Asp282, and Ser325 each coordinate FAD.

The protein belongs to the ferredoxin--NADP reductase type 2 family. Homodimer. FAD is required as a cofactor.

The enzyme catalyses 2 reduced [2Fe-2S]-[ferredoxin] + NADP(+) + H(+) = 2 oxidized [2Fe-2S]-[ferredoxin] + NADPH. This Sulfolobus acidocaldarius (strain ATCC 33909 / DSM 639 / JCM 8929 / NBRC 15157 / NCIMB 11770) protein is Ferredoxin--NADP reductase 2.